Consider the following 103-residue polypeptide: Flagellar hook-basal body complex protein FliE (103 aa).

This sequence belongs to the FliE family.

Its subcellular location is the bacterial flagellum basal body. This Yersinia enterocolitica serotype O:8 / biotype 1B (strain NCTC 13174 / 8081) protein is Flagellar hook-basal body complex protein FliE.